Reading from the N-terminus, the 594-residue chain is DNA ligase (594 aa).

Glu280 contributes to the ATP binding site. Residue Lys282 is the N6-AMP-lysine intermediate of the active site. Arg287, Arg316, Glu345, Phe385, Arg456, and Lys462 together coordinate ATP.

This sequence belongs to the ATP-dependent DNA ligase family. Requires Mg(2+) as cofactor.

The enzyme catalyses ATP + (deoxyribonucleotide)n-3'-hydroxyl + 5'-phospho-(deoxyribonucleotide)m = (deoxyribonucleotide)n+m + AMP + diphosphate.. Its function is as follows. DNA ligase that seals nicks in double-stranded DNA during DNA replication, DNA recombination and DNA repair. The sequence is that of DNA ligase from Halorubrum lacusprofundi (strain ATCC 49239 / DSM 5036 / JCM 8891 / ACAM 34).